Here is a 1102-residue protein sequence, read N- to C-terminus: Trafficking protein particle complex II-specific subunit 130 (1102 aa).

The protein belongs to the TMEM1 family. Part of the multisubunit TRAPP (transport protein particle) II complex composed of BET3, BET5, TRS20, TRS23, TRS31, TRS33, TRS65, TRS120 and TRS130. Interacts with YPT31 and YPT32.

It is found in the golgi apparatus. In terms of biological role, specific subunit of the TRAPP II complex, a highly conserved vesicle tethering complex that functions in the late Golgi as a guanine nucleotide exchange factor (GEF) for the Golgi YPT1 GTPase. TRS130 plays a role in the YPT GEF activity of TRAPP II in concert with the two other TRAPP II-specific subunits TRS65 and TRS120. Required for both the cytoplasm-to-vacuole targeting (Cvt) pathway and starvation-induced autophagy through its role in ATG8 and ATG9 trafficking. In Saccharomyces cerevisiae (strain ATCC 204508 / S288c) (Baker's yeast), this protein is Trafficking protein particle complex II-specific subunit 130 (TRS130).